Reading from the N-terminus, the 433-residue chain is Trigger factor (433 aa).

Residues 161-246 (EDRATIDFTG…LKKVEERELP (86 aa)) form the PPIase FKBP-type domain.

The protein belongs to the FKBP-type PPIase family. Tig subfamily.

The protein resides in the cytoplasm. It catalyses the reaction [protein]-peptidylproline (omega=180) = [protein]-peptidylproline (omega=0). Its function is as follows. Involved in protein export. Acts as a chaperone by maintaining the newly synthesized protein in an open conformation. Functions as a peptidyl-prolyl cis-trans isomerase. The sequence is that of Trigger factor from Edwardsiella ictaluri (strain 93-146).